We begin with the raw amino-acid sequence, 396 residues long: S-adenosylmethionine synthase (396 aa).

Residue His15 coordinates ATP. Asp17 lines the Mg(2+) pocket. Position 43 (Glu43) interacts with K(+). L-methionine contacts are provided by Glu56 and Gln99. A flexible loop region spans residues 99–109 (QSSDIAMGVDK). ATP is bound by residues 175–177 (DGK), 241–242 (RF), Asp250, 256–257 (RK), Ala273, and Lys277. Asp250 is a binding site for L-methionine. Lys281 is a binding site for L-methionine.

The protein belongs to the AdoMet synthase family. In terms of assembly, homotetramer; dimer of dimers. The cofactor is Mg(2+). K(+) serves as cofactor.

The protein localises to the cytoplasm. The enzyme catalyses L-methionine + ATP + H2O = S-adenosyl-L-methionine + phosphate + diphosphate. It functions in the pathway amino-acid biosynthesis; S-adenosyl-L-methionine biosynthesis; S-adenosyl-L-methionine from L-methionine: step 1/1. In terms of biological role, catalyzes the formation of S-adenosylmethionine (AdoMet) from methionine and ATP. The overall synthetic reaction is composed of two sequential steps, AdoMet formation and the subsequent tripolyphosphate hydrolysis which occurs prior to release of AdoMet from the enzyme. This Ruminiclostridium cellulolyticum (strain ATCC 35319 / DSM 5812 / JCM 6584 / H10) (Clostridium cellulolyticum) protein is S-adenosylmethionine synthase.